The following is a 423-amino-acid chain: 3-phosphoshikimate 1-carboxyvinyltransferase (423 aa).

3-phosphoshikimate-binding residues include Lys21, Ser22, and Arg26. Lys21 serves as a coordination point for phosphoenolpyruvate. 2 residues coordinate phosphoenolpyruvate: Gly92 and Arg120. Ser166, Gln168, Ser194, Asp310, and Lys337 together coordinate 3-phosphoshikimate. Gln168 is a phosphoenolpyruvate binding site. The active-site Proton acceptor is Asp310. Positions 341, 384, and 409 each coordinate phosphoenolpyruvate.

The protein belongs to the EPSP synthase family. In terms of assembly, monomer.

Its subcellular location is the cytoplasm. The enzyme catalyses 3-phosphoshikimate + phosphoenolpyruvate = 5-O-(1-carboxyvinyl)-3-phosphoshikimate + phosphate. Its pathway is metabolic intermediate biosynthesis; chorismate biosynthesis; chorismate from D-erythrose 4-phosphate and phosphoenolpyruvate: step 6/7. Catalyzes the transfer of the enolpyruvyl moiety of phosphoenolpyruvate (PEP) to the 5-hydroxyl of shikimate-3-phosphate (S3P) to produce enolpyruvyl shikimate-3-phosphate and inorganic phosphate. The protein is 3-phosphoshikimate 1-carboxyvinyltransferase of Syntrophobacter fumaroxidans (strain DSM 10017 / MPOB).